Reading from the N-terminus, the 89-residue chain is MALTQERKNEIINQFKIHETDTGSPEVQVAILTEQINNLNDHLRVHRKDHHSRRGLLKMVGRRRNLLTYLRNKDINRYRELINKLGLRR.

This sequence belongs to the universal ribosomal protein uS15 family. Part of the 30S ribosomal subunit. Forms a bridge to the 50S subunit in the 70S ribosome, contacting the 23S rRNA.

Functionally, one of the primary rRNA binding proteins, it binds directly to 16S rRNA where it helps nucleate assembly of the platform of the 30S subunit by binding and bridging several RNA helices of the 16S rRNA. Its function is as follows. Forms an intersubunit bridge (bridge B4) with the 23S rRNA of the 50S subunit in the ribosome. The chain is Small ribosomal subunit protein uS15 from Anoxybacillus flavithermus (strain DSM 21510 / WK1).